Here is a 231-residue protein sequence, read N- to C-terminus: Endonuclease NucS (231 aa).

This sequence belongs to the NucS endonuclease family.

The protein localises to the cytoplasm. In terms of biological role, cleaves both 3' and 5' ssDNA extremities of branched DNA structures. This is Endonuclease NucS from Micrococcus luteus (strain ATCC 4698 / DSM 20030 / JCM 1464 / CCM 169 / CCUG 5858 / IAM 1056 / NBRC 3333 / NCIMB 9278 / NCTC 2665 / VKM Ac-2230) (Micrococcus lysodeikticus).